A 303-amino-acid chain; its full sequence is Probable 5-dehydro-4-deoxyglucarate dehydratase (303 aa).

The protein belongs to the DapA family.

It carries out the reaction 5-dehydro-4-deoxy-D-glucarate + H(+) = 2,5-dioxopentanoate + CO2 + H2O. The protein operates within carbohydrate acid metabolism; D-glucarate degradation; 2,5-dioxopentanoate from D-glucarate: step 2/2. This Pseudomonas putida (strain W619) protein is Probable 5-dehydro-4-deoxyglucarate dehydratase.